A 278-amino-acid chain; its full sequence is Juvenile hormone acid O-methyltransferase (278 aa).

It belongs to the methyltransferase superfamily. As to expression, specifically expressed in the corpora allata (CA).

It carries out the reaction (2E,6E)-farnesoate + S-adenosyl-L-methionine = methyl (2E,6E)-farnesoate + S-adenosyl-L-homocysteine. The catalysed reaction is juvenile hormone III carboxylate + S-adenosyl-L-methionine = juvenile hormone III + S-adenosyl-L-homocysteine. O-methyltransferase that transfers a methyl group from S-adenosyl-L-methionine (SAM) to the carboxyl group of juvenile hormone acids to produce active juvenile hormones in the corpora allata, the last step during juvenile hormone biosynthesis. Also able to methylate farnesoate to methyl farnesoate. In Bombyx mori (Silk moth), this protein is Juvenile hormone acid O-methyltransferase.